We begin with the raw amino-acid sequence, 813 residues long: Ankyrin repeat domain-containing protein SOWAHB (813 aa).

Disordered regions lie at residues 142 to 256 and 400 to 436; these read SAAP…QSLS and ETCG…DSHK. The span at 158–176 shows a compositional bias: basic and acidic residues; that stretch reads MSEKARVNPSHWDTKRYYP. Residues 177–189 show a composition bias toward pro residues; the sequence is EDPPVPDSLPVSP. Residues 191–202 show a composition bias toward polar residues; the sequence is CTNTRQSSFTST. Residues 208–244 are compositionally biased toward low complexity; the sequence is HSLSSNNLSSSFSSPESPGLVAKPYNASPSPAGSSPN. Positions 245–256 are enriched in polar residues; sequence IREQTPKSQSLS. Acidic residues predominate over residues 400–416; it reads ETCGSEESDSGEGGDCD. ANK repeat units follow at residues 657 to 686 and 696 to 726; these read TGYT…KAGI and NGYT…NVKV.

This sequence belongs to the SOWAH family.

The chain is Ankyrin repeat domain-containing protein SOWAHB (sowahb) from Xenopus laevis (African clawed frog).